Here is a 182-residue protein sequence, read N- to C-terminus: Ribosome-recycling factor (182 aa).

This sequence belongs to the RRF family.

It is found in the cytoplasm. Functionally, responsible for the release of ribosomes from messenger RNA at the termination of protein biosynthesis. May increase the efficiency of translation by recycling ribosomes from one round of translation to another. The polypeptide is Ribosome-recycling factor (Gloeobacter violaceus (strain ATCC 29082 / PCC 7421)).